Here is a 572-residue protein sequence, read N- to C-terminus: Transmembrane glycoprotein NMB (572 aa).

The signal sequence occupies residues 1–22 (MESLCGVLVFLLLAAGLPLQAA). Residues 23–500 (KRFRDVLGHE…DLGSPLRTVN (478 aa)) are Extracellular-facing. N-linked (GlcNAc...) asparagine glycans are attached at residues Asn-93, Asn-134, Asn-200, Asn-249, Asn-275, Asn-296, Asn-300, Asn-306, and Asn-312. The PKD domain maps to 251–338 (SDETFLRDLP…SPSSSTSPSP (88 aa)). Positions 321 to 359 (GPCPSPTPSPSSSTSPSPASSPSPTLSTPSPSLMPTGHK) are disordered. Positions 330–356 (PSSSTSPSPASSPSPTLSTPSPSLMPT) are enriched in low complexity. 2 N-linked (GlcNAc...) asparagine glycosylation sites follow: Asn-461 and Asn-469. Residues 501-521 (GVLISIGCLAMFVTMVTILLY) form a helical membrane-spanning segment. Over 522-572 (KKHKTYKPIGNCTRNVVKGKGLSVFLSHAKAPFSRGDREKDPLLQDKPWML) the chain is Cytoplasmic. At Ser-544 the chain carries Phosphoserine. The Cell attachment site signature appears at 556-558 (RGD).

It belongs to the PMEL/NMB family.

The protein localises to the cell membrane. The protein resides in the melanosome membrane. Its subcellular location is the early endosome membrane. Its function is as follows. Could be a melanogenic enzyme. This is Transmembrane glycoprotein NMB (Gpnmb) from Rattus norvegicus (Rat).